The following is a 613-amino-acid chain: MTGCGRRSGWLPPLRLLLLPLLLGGPGVGAAQLAALYSASDPLTLLQADTVRSTVLNSPSAWAVEFFASWCGHCIAFAPTWKALAKDIKDWRPALNLAALNCADETNNAVCRDFNIAGFPSVRFFKAFSKNSTGTTLPVAGANVQMLRERLIDALESHHDTWPSACPPLEPVKPKEIDTFFARNNQEYLVLIFEQENSYLGREVTLDLSQHHDLVVRRVLSTEANVVRKFGVADFPSCYLLFRNGSVSRVPVLVESRRFYTAYLQRLSEVTREGTPTPAVPTISDQIAPTVWKFADRSKIYMADLESALHYILRVEVGRFSVLEGQRLMALKKFVTVLTKYFPGQPLVRNFLQSTNEWLKRQHKKKMPYSFFKTAMDSRNEEAVITKEVNWVGCQGSESHFRGFPCSLWILFHFLTVQASQKNAESSQKPANGQEVLQAIRNYVRFFFGCRDCANHFEQMAAGSMHRVKSPNDAVLWLWTSHNRVNARLAGAPSEDPQFPKVQWPPPELCSACHNELSGEPVWDVDATLRFLKTHFSPSNIVLNFPPAEPASRSSVHSWGATPHLELDALGLVTRNSALALERAEISESPGSNAMPNIPAERPELFEALSHSR.

Positions 1–30 are cleaved as a signal peptide; that stretch reads MTGCGRRSGWLPPLRLLLLPLLLGGPGVGA. One can recognise a Thioredoxin domain in the interval 37–157; it reads YSASDPLTLL…RERLIDALES (121 aa). Residues Cys-71 and Cys-74 each act as nucleophile in the active site. Disulfide bonds link Cys-71–Cys-74 and Cys-102–Cys-111. N-linked (GlcNAc...) asparagine glycans are attached at residues Asn-131 and Asn-244. Cys-394 and Cys-406 are disulfide-bonded. Residues 397 to 504 enclose the ERV/ALR sulfhydryl oxidase domain; that stretch reads SESHFRGFPC…EDPQFPKVQW (108 aa). Residues Arg-402, Trp-409, and His-413 each contribute to the FAD site. The residue at position 427 (Ser-427) is a Phosphoserine. The cysteines at positions 450 and 453 are disulfide-linked. FAD is bound by residues Asp-452, His-456, 479 to 486, Lys-501, and Trp-504; that span reads WTSHNRVN. Cysteines 510 and 513 form a disulfide.

Belongs to the quiescin-sulfhydryl oxidase (QSOX) family. Monomer. Requires FAD as cofactor. N-glycosylated. O-glycosylated on Thr and Ser residues. In terms of tissue distribution, detected in endometrium and in uterus glandular epithelial cells (at protein level). Expressed in testis, placenta, pancreas, lung, ovary, endometrium, but not in brain, liver and kidney tissues. Higher expression in epithelial cells.

Its subcellular location is the secreted. The catalysed reaction is 2 R'C(R)SH + O2 = R'C(R)S-S(R)CR' + H2O2. Its function is as follows. Catalyzes the oxidation of sulfhydryl groups in peptide and protein thiols to disulfides with the reduction of oxygen to hydrogen peroxide. Plays a role in disulfide bond formation in a variety of extracellular proteins. In fibroblasts, required for normal incorporation of laminin into the extracellular matrix, and thereby for normal cell-cell adhesion and cell migration. The sequence is that of Sulfhydryl oxidase 1 (QSOX1) from Cavia porcellus (Guinea pig).